We begin with the raw amino-acid sequence, 818 residues long: IQ and AAA domain-containing protein 1-like (818 aa).

The region spanning 206–235 is the IQ domain; it reads QGQAAVTIQKVWKGYLQRKRTQQDRRMEME. 2 disordered regions span residues 344 to 377 and 458 to 482; these read QMQE…AKKG and EERP…KDLT. The span at 463-476 shows a compositional bias: basic residues; sequence RAPKKTPGKKTGKK. Residue 567 to 574 coordinates ATP; sequence GPSGMGKK. Residues 795–818 form a disordered region; it reads SMKHRMDQLEAEEAKLDKEKKKRK. The segment covering 798-818 has biased composition (basic and acidic residues); that stretch reads HRMDQLEAEEAKLDKEKKKRK.

Belongs to the AAA ATPase family.

This chain is IQ and AAA domain-containing protein 1-like (IQCA1L), found in Homo sapiens (Human).